The sequence spans 268 residues: Putative esterase/lipase 2 (268 aa).

Histidine 28 is a catalytic residue. The active-site Charge relay system is histidine 96.

This sequence belongs to the lipase/esterase LIP3/BchO family.

This Mycoplasma pneumoniae (strain ATCC 29342 / M129 / Subtype 1) (Mycoplasmoides pneumoniae) protein is Putative esterase/lipase 2.